The following is a 71-amino-acid chain: Large ribosomal subunit protein uL29 (71 aa).

The protein belongs to the universal ribosomal protein uL29 family.

This chain is Large ribosomal subunit protein uL29, found in Rickettsia canadensis (strain McKiel).